The following is an 869-amino-acid chain: Sodium-dependent phosphate transporter (869 aa).

Residues 1-18 (MEAVAELSAPSLAGAPGE) are Extracellular-facing. The chain crosses the membrane as a helical span at residues 19 to 39 (YTWIVAVAGVTCFLTAFAIGA). The Cytoplasmic portion of the chain corresponds to 40–54 (NDVANTFSSSVGSRA). Residues 55–75 (IPLWAAIGMSAVLETVGATLL) traverse the membrane as a helical segment. At 76–97 (GGAVTDSIRSKIIDFEVFRETP) the chain is on the extracellular side. A helical transmembrane segment spans residues 98–118 (SILMTGMLCALVGAGLWLFLA). Residues 119 to 120 (NH) lie on the Cytoplasmic side of the membrane. The helical transmembrane segment at 121–141 (LGLPVSTTHSIIGALLGFGLA) threads the bilayer. Residues 142–154 (SGNVRAVKWTQVA) lie on the Extracellular side of the membrane. Residues 155–175 (FIVGSWVAAPLAASAAGATIF) traverse the membrane as a helical segment. The Cytoplasmic portion of the chain corresponds to 176–196 (VCMRRLILRSRQPLRRAKRFL). A helical membrane pass occupies residues 197-217 (WIFIYLITLTFSVFLVFKNFF). At 218 to 250 (ELNVSCDQMVAGGRVEHFEPCRISRWADAHSGT) the chain is on the extracellular side. Residues 251-271 (ALGIAVALSVALTFVISCLVY) traverse the membrane as a helical segment. The Cytoplasmic portion of the chain corresponds to 272–720 (RFAFYRVESY…SGSADSEIGS (449 aa)). 3 disordered regions span residues 286 to 312 (KRSS…GGLL), 374 to 401 (AAAA…GSSV), and 453 to 571 (SAFL…KRER). Positions 457-481 (SSPSSSVPPSSPSPSSTPSSPSASP) are enriched in low complexity. Residues 482–491 (RRPPSRPPVP) show a composition bias toward pro residues. The segment covering 492–509 (RTCSPAPVSPSVPRAFAS) has biased composition (low complexity). Residues 556–571 (PHPERRDEVPAAKRER) show a composition bias toward basic and acidic residues. The helical transmembrane segment at 721–741 (PWYILLFGGLSMSLGLALLGY) threads the bilayer. Over 742–759 (RVIKTVGVKLVKITPARG) the chain is Extracellular. Residues 760–780 (FSMELGAAWTVLIFSAIGIPL) traverse the membrane as a helical segment. Residues 781–837 (STTHCAVGSTVGVGLMEPKHPRRETGDGPVAEGEEPKKRAVQCPVINTASVNWKLFG) lie on the Cytoplasmic side of the membrane. Residues 838-858 (GVFVSWIITIAFSALVTAALF) form a helical membrane-spanning segment. Residues 859 to 869 (SFAAYSPRMVS) lie on the Extracellular side of the membrane.

Belongs to the inorganic phosphate transporter (PiT) (TC 2.A.20) family.

The protein resides in the cell membrane. It is found in the vacuole membrane. The protein localises to the cytoplasmic vesicle membrane. The enzyme catalyses 2 Na(+)(out) + phosphate(out) = 2 Na(+)(in) + phosphate(in). Functionally, sodium-phosphate symporter which preferentially transports the monovalent form of phosphate with a stoichiometry of two sodium ions per phosphate ion. Plays a role in stabilizing the cytosolic pH and osmoregulation. May be required for optimal virulence of parasites in vivo. This Toxoplasma gondii (strain ATCC 50861 / VEG) protein is Sodium-dependent phosphate transporter.